A 173-amino-acid polypeptide reads, in one-letter code: Small ribosomal subunit protein uS7 (173 aa).

Belongs to the universal ribosomal protein uS7 family. Part of the 30S ribosomal subunit. Contacts proteins S9 and S11.

One of the primary rRNA binding proteins, it binds directly to 16S rRNA where it nucleates assembly of the head domain of the 30S subunit. Is located at the subunit interface close to the decoding center, probably blocks exit of the E-site tRNA. This is Small ribosomal subunit protein uS7 from Orientia tsutsugamushi (strain Ikeda) (Rickettsia tsutsugamushi).